The primary structure comprises 553 residues: Solute carrier family 45 member 3 (553 aa).

A run of 11 helical transmembrane segments spans residues 19–39 (LLINLLTFGLEVCLAAGITYV), 52–72 (FMTMVLGIGPVLGLVSVPLLG), 88–108 (FIWALSLGILLSLFLIPRAGW), 120–140 (LELALLILGVGLLDFCGQVCF), 161–181 (YSVYAFMISLGGCLGYLLPAI), 198–218 (CLFGLLTLIFLTCVAATLLVA), 275–295 (FVAELCSWMALMTFTLFYTDF), 323–343 (MGSLGLFLQCAISLVFSLVMD), 353–373 (AVYLASVAAFPVAAGATCLSH), 382–402 (AALTGFTFSALQILPYTLASL), and 522–542 (AYMVSAAGLGLVAIYFATQVV).

Belongs to the glycoside-pentoside-hexuronide (GPH) cation symporter transporter (TC 2.A.2) family.

The protein localises to the membrane. It catalyses the reaction sucrose(out) + H(+)(out) = sucrose(in) + H(+)(in). Functionally, proton-associated sucrose transporter. May be able to transport also glucose and fructose. This Macaca fascicularis (Crab-eating macaque) protein is Solute carrier family 45 member 3 (SLC45A3).